Consider the following 311-residue polypeptide: Porphobilinogen deaminase (311 aa).

At C241 the chain carries S-(dipyrrolylmethanemethyl)cysteine.

It belongs to the HMBS family. Monomer. Dipyrromethane is required as a cofactor.

It catalyses the reaction 4 porphobilinogen + H2O = hydroxymethylbilane + 4 NH4(+). It functions in the pathway porphyrin-containing compound metabolism; protoporphyrin-IX biosynthesis; coproporphyrinogen-III from 5-aminolevulinate: step 2/4. Tetrapolymerization of the monopyrrole PBG into the hydroxymethylbilane pre-uroporphyrinogen in several discrete steps. In Carboxydothermus hydrogenoformans (strain ATCC BAA-161 / DSM 6008 / Z-2901), this protein is Porphobilinogen deaminase.